The chain runs to 536 residues: CTP synthase (536 aa).

Positions 1 to 267 (MTKFIFVTGG…DDIVIKRLQL (267 aa)) are amidoligase domain. Ser-13 is a CTP binding site. UTP is bound at residue Ser-13. 14–19 (SLGKGI) contacts ATP. Tyr-54 is a binding site for L-glutamine. Asp-71 contacts ATP. 2 residues coordinate Mg(2+): Asp-71 and Glu-141. Residues 148–150 (DIE), 188–193 (KTKPTQ), and Lys-224 contribute to the CTP site. Residues 188–193 (KTKPTQ) and Lys-224 each bind UTP. 240–242 (RDA) contacts ATP. In terms of domain architecture, Glutamine amidotransferase type-1 spans 293 to 535 (TIGLVGKYVS…IEASLKYQQN (243 aa)). Residue Gly-355 participates in L-glutamine binding. Catalysis depends on Cys-382, which acts as the Nucleophile; for glutamine hydrolysis. L-glutamine contacts are provided by residues 383-386 (LGMQ), Glu-406, and Arg-463. Catalysis depends on residues His-508 and Glu-510.

This sequence belongs to the CTP synthase family. As to quaternary structure, homotetramer.

It carries out the reaction UTP + L-glutamine + ATP + H2O = CTP + L-glutamate + ADP + phosphate + 2 H(+). It catalyses the reaction L-glutamine + H2O = L-glutamate + NH4(+). The enzyme catalyses UTP + NH4(+) + ATP = CTP + ADP + phosphate + 2 H(+). The protein operates within pyrimidine metabolism; CTP biosynthesis via de novo pathway; CTP from UDP: step 2/2. With respect to regulation, allosterically activated by GTP, when glutamine is the substrate; GTP has no effect on the reaction when ammonia is the substrate. The allosteric effector GTP functions by stabilizing the protein conformation that binds the tetrahedral intermediate(s) formed during glutamine hydrolysis. Inhibited by the product CTP, via allosteric rather than competitive inhibition. Catalyzes the ATP-dependent amination of UTP to CTP with either L-glutamine or ammonia as the source of nitrogen. Regulates intracellular CTP levels through interactions with the four ribonucleotide triphosphates. The protein is CTP synthase of Staphylococcus aureus (strain COL).